We begin with the raw amino-acid sequence, 379 residues long: NADH-quinone oxidoreductase subunit D 1 (379 aa).

Belongs to the complex I 49 kDa subunit family. In terms of assembly, NDH-1 is composed of 14 different subunits. Subunits NuoB, C, D, E, F, and G constitute the peripheral sector of the complex.

The protein resides in the cell inner membrane. The catalysed reaction is a quinone + NADH + 5 H(+)(in) = a quinol + NAD(+) + 4 H(+)(out). Functionally, NDH-1 shuttles electrons from NADH, via FMN and iron-sulfur (Fe-S) centers, to quinones in the respiratory chain. The immediate electron acceptor for the enzyme in this species is believed to be ubiquinone. Couples the redox reaction to proton translocation (for every two electrons transferred, four hydrogen ions are translocated across the cytoplasmic membrane), and thus conserves the redox energy in a proton gradient. The chain is NADH-quinone oxidoreductase subunit D 1 from Anaeromyxobacter sp. (strain K).